Here is a 2645-residue protein sequence, read N- to C-terminus: Non-reducing polyketide synthase AC (2645 aa).

The N-terminal acylcarrier protein transacylase domain (SAT) stretch occupies residues 73-2366 (ALQNLNEWLK…TDIVHNAWPM (2294 aa)). Catalysis depends on histidine 260, which acts as the Proton donor/acceptor; for transacylase activity. The 419-residue stretch at 416 to 834 (DDKIAVIGMA…GSNSSLVVTE (419 aa)) folds into the Ketosynthase family 3 (KS3) domain. Catalysis depends on for beta-ketoacyl synthase activity residues cysteine 583, histidine 718, and histidine 757. A malonyl-CoA:ACP transacylase (MAT) domain region spans residues 943 to 1252 (CFGGQISTYI…HAVSITTDKS (310 aa)). The segment at 1324–1457 (SKGFTSFAGY…GVCSFCSATD (134 aa)) is N-terminal hotdog fold. A PKS/mFAS DH domain is found at 1324 to 1637 (SKGFTSFAGY…YNKVPLPVMR (314 aa)). Residues 1330-1641 (FAGYIDGNQR…PLPVMRGILG (312 aa)) form a product template (PT) domain region. Histidine 1359 functions as the Proton acceptor; for dehydratase activity in the catalytic mechanism. Residues 1487–1637 (NIMQGTANIY…YNKVPLPVMR (151 aa)) are C-terminal hotdog fold. Aspartate 1542 (proton donor; for dehydratase activity) is an active-site residue. Residues 1684 to 1696 (NGTTGTENPQIKS) show a composition bias toward polar residues. The interval 1684–1716 (NGTTGTENPQIKSKTNKVKKVPTRKSGGSDLET) is disordered. Basic residues predominate over residues 1697-1706 (KTNKVKKVPT). One can recognise a Carrier domain in the interval 1711 to 1788 (GSDLETPAKT…SLVKYIREIR (78 aa)). Serine 1748 is modified (O-(pantetheine 4'-phosphoryl)serine). The segment covering 1794–1805 (QNVDDSESESEE) has biased composition (acidic residues). The segment at 1794–1816 (QNVDDSESESEELQQQATPIDSA) is disordered. The active-site For methyltransferase activity is the tyrosine 2009. The interval 2023–2197 (EVFVEKIGSS…SVGYGHVDWT (175 aa)) is methyltransferase (CMeT) domain. Residues 2269-2573 (CVLITGATGS…NIIPFYDWVQ (305 aa)) are NADPH-binding (R) domain.

It functions in the pathway mycotoxin biosynthesis. In terms of biological role, non-reducing polyketide synthase; part of the gene cluster that mediates the biosynthesis of the selective antifungal agent ascochitine, an o-quinone methide that plays a possible protective role against other microbial competitors in nature and is considered to be important for pathogenicity of legume-associated Didymella species. The pathway probably begins with the synthesis of a keto-aldehyde intermediate by the ascochitine non-reducing polyketide synthase pksAC from successive condensations of 4 malonyl-CoA units, presumably with a simple acetyl-CoA starter unit. Release of the keto-aldehyde intermediate is consistent with the presence of the C-terminal reductive release domain. The HR-PKS (orf7) probably makes a diketide starter unit which is passed to the non-reducing polyketide synthase pksAC for further extension, producing ascochital and ascochitine. The aldehyde dehydrogenase (orf1), the 2-oxoglutarate-dependent dioxygenase (orf3) and the dehydrogenase (orf9) are probably involved in subsequent oxidations of methyl groups to the carboxylic acid of the heterocyclic ring. The ascochitine gene cluster also includes a gene encoding a short peptide (orf2) that is often found in secondary metabolite gene clusters and which function has still to be determined. The polypeptide is Non-reducing polyketide synthase AC (Didymella fabae (Leaf and pod spot disease fungus)).